The following is an 88-amino-acid chain: U1-hexatoxin-Iw1c (88 aa).

The N-terminal stretch at 1 to 17 (LKFVVLICLVIMASTSA) is a signal peptide. Gln-18 is subject to Pyrrolidone carboxylic acid. Disulfide bonds link Cys-20/Cys-31, Cys-25/Cys-39, Cys-30/Cys-65, Cys-49/Cys-73, and Cys-67/Cys-80. A propeptide spanning residues 86–88 (RSE) is cleaved from the precursor.

This sequence belongs to the MIT-like AcTx family. As to expression, expressed by the venom gland.

Its subcellular location is the secreted. This is U1-hexatoxin-Iw1c from Illawarra wisharti (Illawarra funnel-web spider).